A 329-amino-acid chain; its full sequence is Cytosolic arginine sensor for mTORC1 subunit 1 (329 aa).

Ser-14 bears the Phosphoserine mark. ACT domains lie at Ala-72–Ala-138 and Gly-260–Gln-321. L-arginine is bound by residues Ser-111–Val-112, Gly-274, Ile-280–Val-281, and Thr-300–Asp-304.

Belongs to the GATS family. Forms homodimers and heterodimers with CASTOR2. Interacts with the GATOR2 complex which is composed of MIOS, SEC13, SEH1L, WDR24 and WDR59; the interaction is negatively regulated by arginine. Interacts with TM4SF5; the interaction is positively regulated by leucine and is negatively regulated by arginine. In terms of processing, phosphorylation at Ser-14 by AKT1, promoting the interaction between CASTOR1 and RNF167. Ubiquitinated by RNF167 via 'Lys-29'-polyubiquitination, leading to its degradation, releasing the GATOR2 complex. Ubiquitination by RNF167 is promoted by phosphorylation at Ser-14 by AKT1.

It localises to the cytoplasm. Its subcellular location is the cytosol. In terms of biological role, functions as an intracellular arginine sensor within the amino acid-sensing branch of the TORC1 signaling pathway. As a homodimer or a heterodimer with CASTOR2, binds and inhibits the GATOR subcomplex GATOR2 and thereby mTORC1. Binding of arginine to CASTOR1 allosterically disrupts the interaction of CASTOR1-containing dimers with GATOR2 which can in turn activate mTORC1 and the TORC1 signaling pathway. This is Cytosolic arginine sensor for mTORC1 subunit 1 from Pongo abelii (Sumatran orangutan).